The sequence spans 150 residues: Large ribosomal subunit protein uL13 (150 aa).

Belongs to the universal ribosomal protein uL13 family. As to quaternary structure, part of the 50S ribosomal subunit.

Its function is as follows. This protein is one of the early assembly proteins of the 50S ribosomal subunit, although it is not seen to bind rRNA by itself. It is important during the early stages of 50S assembly. This is Large ribosomal subunit protein uL13 from Mesoplasma florum (strain ATCC 33453 / NBRC 100688 / NCTC 11704 / L1) (Acholeplasma florum).